A 344-amino-acid polypeptide reads, in one-letter code: Arginine N-succinyltransferase (344 aa).

A succinyl-CoA-binding site is contributed by leucine 125. The active-site Proton donor is histidine 229.

Belongs to the arginine N-succinyltransferase family.

It carries out the reaction succinyl-CoA + L-arginine = N(2)-succinyl-L-arginine + CoA + H(+). Its pathway is amino-acid degradation; L-arginine degradation via AST pathway; L-glutamate and succinate from L-arginine: step 1/5. In terms of biological role, catalyzes the transfer of succinyl-CoA to arginine to produce N(2)-succinylarginine. The chain is Arginine N-succinyltransferase from Escherichia fergusonii (strain ATCC 35469 / DSM 13698 / CCUG 18766 / IAM 14443 / JCM 21226 / LMG 7866 / NBRC 102419 / NCTC 12128 / CDC 0568-73).